A 38-amino-acid chain; its full sequence is MKKFLTTAPVFSAIWFTLTAGIMIEFNRFYPDLLFHPL.

A helical membrane pass occupies residues 4–24 (FLTTAPVFSAIWFTLTAGIMI).

This sequence belongs to the PsaJ family.

The protein localises to the plastid. The protein resides in the organellar chromatophore thylakoid membrane. In terms of biological role, may help in the organization of the PsaE and PsaF subunits. In Paulinella chromatophora, this protein is Photosystem I reaction center subunit IX.